Here is a 512-residue protein sequence, read N- to C-terminus: Retinaldehyde dehydrogenase 3 (512 aa).

Positions 1–22 (MATANGAVENGQPDRKPPALPR) are disordered. An N-acetylalanine modification is found at alanine 2. Residues lysine 204, glutamate 207, and 257 to 262 (GSTEVG) contribute to the NAD(+) site. Glutamate 280 (proton acceptor) is an active-site residue. Cysteine 314 serves as the catalytic Nucleophile. 2 residues coordinate NAD(+): glutamine 361 and glutamate 411.

Belongs to the aldehyde dehydrogenase family. Homotetramer. In terms of tissue distribution, expressed at low levels in many tissues and at higher levels in salivary gland, stomach, and kidney.

Its subcellular location is the cytoplasm. It catalyses the reaction all-trans-retinal + NAD(+) + H2O = all-trans-retinoate + NADH + 2 H(+). The enzyme catalyses retinal + NAD(+) + H2O = retinoate + NADH + 2 H(+). It carries out the reaction all-trans-13,14-dihydroretinal + NAD(+) + H2O = all-trans-13,14-dihydroretinoate + NADH + 2 H(+). The protein operates within cofactor metabolism; retinol metabolism. In terms of biological role, catalyzes the NAD-dependent oxidation of aldehyde substrates, such as all-trans-retinal and all-trans-13,14-dihydroretinal, to their corresponding carboxylic acids, all-trans-retinoate and all-trans-13,14-dihydroretinoate, respectively. High specificity for all-trans-retinal as substrate, can also accept acetaldehyde as substrate in vitro but with lower affinity. Required for the biosynthesis of normal levels of retinoate in the embryonic ocular and nasal regions; a critical lipid in the embryonic development of the eye and the nasal region. This chain is Retinaldehyde dehydrogenase 3 (ALDH1A3), found in Homo sapiens (Human).